The following is a 309-amino-acid chain: Wall-associated proteinase (309 aa).

N-linked (GlcNAc...) asparagine glycosylation is found at Asn-190 and Asn-295.

The protein resides in the secreted. Its subcellular location is the cell wall. The protein localises to the membrane. May participate in wall plasticization and/or intussusception or in cell wall turnover. In Coccidioides immitis (strain RS) (Valley fever fungus), this protein is Wall-associated proteinase.